Here is a 600-residue protein sequence, read N- to C-terminus: NADH-quinone oxidoreductase subunit C/D (600 aa).

The NADH dehydrogenase I subunit C stretch occupies residues 1 to 190; it reads MIDLMPKKNT…EPFFLNEQKE (190 aa). Positions 214–600 are NADH dehydrogenase I subunit D; the sequence is EFMFLNLGPN…IDFVMSDVDR (387 aa).

It in the N-terminal section; belongs to the complex I 30 kDa subunit family. The protein in the C-terminal section; belongs to the complex I 49 kDa subunit family. NDH-1 is composed of 13 different subunits. Subunits NuoB, CD, E, F, and G constitute the peripheral sector of the complex.

The protein resides in the cell membrane. The catalysed reaction is a quinone + NADH + 5 H(+)(in) = a quinol + NAD(+) + 4 H(+)(out). In terms of biological role, NDH-1 shuttles electrons from NADH, via FMN and iron-sulfur (Fe-S) centers, to quinones in the respiratory chain. The immediate electron acceptor for the enzyme in this species is believed to be ubiquinone. Couples the redox reaction to proton translocation (for every two electrons transferred, four hydrogen ions are translocated across the cytoplasmic membrane), and thus conserves the redox energy in a proton gradient. This is NADH-quinone oxidoreductase subunit C/D from Buchnera aphidicola subsp. Acyrthosiphon pisum (strain Tuc7).